We begin with the raw amino-acid sequence, 105 residues long: Nucleoid-associated protein PTH_0052 (105 aa).

This sequence belongs to the YbaB/EbfC family. In terms of assembly, homodimer.

It is found in the cytoplasm. It localises to the nucleoid. Its function is as follows. Binds to DNA and alters its conformation. May be involved in regulation of gene expression, nucleoid organization and DNA protection. In Pelotomaculum thermopropionicum (strain DSM 13744 / JCM 10971 / SI), this protein is Nucleoid-associated protein PTH_0052.